A 154-amino-acid polypeptide reads, in one-letter code: MQHYETVEAVTFAYGQRHHLEIQITREIAKEQGIRHHILDMSLLGQITAQPDFATIHISYIPDKLCVESKSLKLYLFSYRNHGDFHENCINTIGKDLVNLLDPRYLEVWGKFTPRGGISIDPYYNYGKQGTKYEGLAEQRLFQHDLYPEKIDNR.

The Proton donor role is filled by Asp-52. Substrate contacts are provided by residues 67–69 and 86–87; these read VES and HE.

Belongs to the GTP cyclohydrolase I family. QueF type 1 subfamily.

Its subcellular location is the cytoplasm. It carries out the reaction 7-aminomethyl-7-carbaguanine + 2 NADP(+) = 7-cyano-7-deazaguanine + 2 NADPH + 3 H(+). Its pathway is tRNA modification; tRNA-queuosine biosynthesis. Catalyzes the NADPH-dependent reduction of 7-cyano-7-deazaguanine (preQ0) to 7-aminomethyl-7-deazaguanine (preQ1). The protein is Putative NADPH-dependent 7-cyano-7-deazaguanine reductase of Streptococcus pneumoniae serotype 4 (strain ATCC BAA-334 / TIGR4).